The following is a 231-amino-acid chain: Protein FMP52, mitochondrial (231 aa).

A mitochondrion-targeting transit peptide spans 1 to 44 (MNGLVLGATGLCGGGFLRHAQEAPQFSKVYAILRRELPFPATDK).

It belongs to the FMP52 family.

It localises to the mitochondrion outer membrane. The chain is Protein FMP52, mitochondrial (FMP52) from Saccharomyces cerevisiae (strain ATCC 204508 / S288c) (Baker's yeast).